We begin with the raw amino-acid sequence, 262 residues long: 4-hydroxy-2-oxo-heptane-1,7-dioate aldolase (262 aa).

His-45 acts as the Proton acceptor in catalysis. Position 147 (Gln-147) interacts with substrate. Glu-149 serves as a coordination point for a divalent metal cation. Ala-174 and Asp-175 together coordinate substrate. Asp-175 provides a ligand contact to a divalent metal cation.

Belongs to the HpcH/HpaI aldolase family. Homohexamer; trimer of dimers. The cofactor is a divalent metal cation.

It carries out the reaction 4-hydroxy-2-oxoheptanedioate = succinate semialdehyde + pyruvate. Its pathway is aromatic compound metabolism; 4-hydroxyphenylacetate degradation; pyruvate and succinate semialdehyde from 4-hydroxyphenylacetate: step 7/7. Catalyzes the reversible retro-aldol cleavage of 4-hydroxy-2-ketoheptane-1,7-dioate (HKHD) to pyruvate and succinic semialdehyde. The sequence is that of 4-hydroxy-2-oxo-heptane-1,7-dioate aldolase from Shigella boydii serotype 4 (strain Sb227).